The sequence spans 154 residues: Golgi-associated plant pathogenesis-related protein 1 (154 aa).

The segment at 1-21 (MGKSASKQFHNEVLKAHNEYR) is disordered. A lipid anchor (N-myristoyl glycine) is attached at G2. A compositionally biased stretch (basic and acidic residues) spans 9 to 21 (FHNEVLKAHNEYR). The SCP domain maps to 14–132 (LKAHNEYRQK…SDGSSFVVAR (119 aa)). Positions 30-53 (KLCKNLNREAQQYSEALASTRILK) form a coiled coil. The segment at 91–98 (NFQQPGFT) is interaction with CAV1.

It belongs to the CRISP family. In terms of assembly, homodimer. Interacts with CAV1. As to expression, highest expression in lung and peripheral leukocytes, and minor expression in liver and kidney.

The protein localises to the golgi apparatus membrane. The sequence is that of Golgi-associated plant pathogenesis-related protein 1 (GLIPR2) from Homo sapiens (Human).